Consider the following 587-residue polypeptide: 2-succinyl-5-enolpyruvyl-6-hydroxy-3-cyclohexene-1-carboxylate synthase (587 aa).

The protein belongs to the TPP enzyme family. MenD subfamily. Homodimer. Requires Mg(2+) as cofactor. The cofactor is Mn(2+). It depends on thiamine diphosphate as a cofactor.

It carries out the reaction isochorismate + 2-oxoglutarate + H(+) = 5-enolpyruvoyl-6-hydroxy-2-succinyl-cyclohex-3-ene-1-carboxylate + CO2. The protein operates within quinol/quinone metabolism; 1,4-dihydroxy-2-naphthoate biosynthesis; 1,4-dihydroxy-2-naphthoate from chorismate: step 2/7. Its pathway is cofactor biosynthesis; phylloquinone biosynthesis. Catalyzes the thiamine diphosphate-dependent decarboxylation of 2-oxoglutarate and the subsequent addition of the resulting succinic semialdehyde-thiamine pyrophosphate anion to isochorismate to yield 2-succinyl-5-enolpyruvyl-6-hydroxy-3-cyclohexene-1-carboxylate (SEPHCHC). The polypeptide is 2-succinyl-5-enolpyruvyl-6-hydroxy-3-cyclohexene-1-carboxylate synthase (Prochlorococcus marinus (strain MIT 9301)).